Reading from the N-terminus, the 405-residue chain is Imidazolonepropionase (405 aa).

Fe(3+) is bound by residues histidine 72 and histidine 74. Zn(2+)-binding residues include histidine 72 and histidine 74. 4-imidazolone-5-propanoate is bound by residues arginine 81, tyrosine 144, and histidine 177. Residue tyrosine 144 participates in N-formimidoyl-L-glutamate binding. Position 242 (histidine 242) interacts with Fe(3+). Histidine 242 provides a ligand contact to Zn(2+). Position 245 (glutamine 245) interacts with 4-imidazolone-5-propanoate. Aspartate 317 contributes to the Fe(3+) binding site. Residue aspartate 317 coordinates Zn(2+). Residues asparagine 319 and glycine 321 each coordinate N-formimidoyl-L-glutamate. Threonine 322 lines the 4-imidazolone-5-propanoate pocket.

Belongs to the metallo-dependent hydrolases superfamily. HutI family. Zn(2+) is required as a cofactor. Fe(3+) serves as cofactor.

It is found in the cytoplasm. The catalysed reaction is 4-imidazolone-5-propanoate + H2O = N-formimidoyl-L-glutamate. Its pathway is amino-acid degradation; L-histidine degradation into L-glutamate; N-formimidoyl-L-glutamate from L-histidine: step 3/3. In terms of biological role, catalyzes the hydrolytic cleavage of the carbon-nitrogen bond in imidazolone-5-propanoate to yield N-formimidoyl-L-glutamate. It is the third step in the universal histidine degradation pathway. This is Imidazolonepropionase from Klebsiella pneumoniae subsp. pneumoniae (strain ATCC 700721 / MGH 78578).